The chain runs to 543 residues: MAAKELHFNVDARAALKRGVDQLAEAVKVTLGPKGRNVVIDKKFGAPTVTKDGVTVAKEIELADPIENMGAQMVKEVATKTSDLAGDGTTTATVLAQAIFREGLKNVTAGSNPMALKRGIEKAVAGIVEELKRISVPTTGKKEIAQVGTISANNDPEIGNLIAEAMEKVGKDGVITVEEAKGLETTLETVDGMQFDRGYLSPYFVTDPEKMEAVLENALILIHDKKISAMKDLLPALEKVAQLGKPLLIIAEDVEGEALATLVVNKLRGTLRICAVKAPGFGDRRKAMLQDIATLTKGQVISDEVGFKLENAVLTDLGSAKRIVIDKDNTTIIDGAGEQKDIEGRVREIRGAIDKSTSDYDREKLQERLAKLAGGVAVINVGAATEAEMKEKKARVEDALHATRAAVEEGIVPGGGVALIRAQHVLKDVKVAERDEQIGVDIVRRAIEEPLRMIVQNAGGEGSIVVEKIRTAKETSFGYNALTDVYEDLVQAGVIDPTKVTRTALQNAASIAGLLLTTEALIVEKKEDKPAAPAGGPGMGGMY.

ATP contacts are provided by residues 30–33 (TLGP), lysine 51, 87–91 (DGTTT), glycine 415, 480–482 (NAL), and aspartate 496.

It belongs to the chaperonin (HSP60) family. In terms of assembly, forms a cylinder of 14 subunits composed of two heptameric rings stacked back-to-back. Interacts with the co-chaperonin GroES.

The protein resides in the cytoplasm. It carries out the reaction ATP + H2O + a folded polypeptide = ADP + phosphate + an unfolded polypeptide.. Its function is as follows. Together with its co-chaperonin GroES, plays an essential role in assisting protein folding. The GroEL-GroES system forms a nano-cage that allows encapsulation of the non-native substrate proteins and provides a physical environment optimized to promote and accelerate protein folding. The polypeptide is Chaperonin GroEL (Gemmatimonas aurantiaca (strain DSM 14586 / JCM 11422 / NBRC 100505 / T-27)).